Reading from the N-terminus, the 110-residue chain is METIAKHRYARTSAQKARLVADLVRGKKVAQALEILTFTNKKAAALVKKVLESAIANAEHNDGADIDDLKVAKIFVDEGPSMKRVMPRAKGRADRILKRTSHITVVVSDR.

Belongs to the universal ribosomal protein uL22 family. As to quaternary structure, part of the 50S ribosomal subunit.

In terms of biological role, this protein binds specifically to 23S rRNA; its binding is stimulated by other ribosomal proteins, e.g. L4, L17, and L20. It is important during the early stages of 50S assembly. It makes multiple contacts with different domains of the 23S rRNA in the assembled 50S subunit and ribosome. The globular domain of the protein is located near the polypeptide exit tunnel on the outside of the subunit, while an extended beta-hairpin is found that lines the wall of the exit tunnel in the center of the 70S ribosome. The chain is Large ribosomal subunit protein uL22 from Histophilus somni (strain 129Pt) (Haemophilus somnus).